The sequence spans 192 residues: MADHALNLDDFLSRFQLLRPQPSRHALNQRQAAVLVPIVRRPQPGLLLTQRSPLLRKHAGQVAFPGGAVDNTDATLIAAALREAQEEVAIPPEAVEVIGVLPPVDSVTGFQVTPVVGIIPPNLHYHASQDEVSAVFEMPLAEALRLGRYHPLDIHRRGNDHRVWLSWYQHYFVWGMTAGIIRELALQIGARP.

One can recognise a Nudix hydrolase domain in the interval 29–160; sequence QRQAAVLVPI…PLDIHRRGND (132 aa). The Nudix box signature appears at 67-89; sequence GAVDNTDATLIAAALREAQEEVA. Residues E83 and E87 each coordinate Mg(2+).

This sequence belongs to the Nudix hydrolase family. PCD1 subfamily. Mn(2+) serves as cofactor. Requires Mg(2+) as cofactor.

Its function is as follows. Probably mediates the hydrolysis of some nucleoside diphosphate derivatives. This is an uncharacterized protein from Klebsiella pneumoniae (strain 342).